A 916-amino-acid chain; its full sequence is Beta-scruin (916 aa).

6 Kelch repeats span residues 82–133 (AVLI…YFHG), 134–187 (KVYL…IMDE), 188–235 (RIFV…NNEG), 237–289 (IYVV…TQNK), 291–341 (IWIW…KAGT), and 342–390 (QVFI…GIPV). A disordered region spans residues 393–426 (SPASDITTSKTTRSGSRKTQKTLKDKQQSDIHAR). Over residues 414–425 (TLKDKQQSDIHA) the composition is skewed to basic and acidic residues. Kelch repeat units lie at residues 586 to 637 (VIIA…YYRG), 638 to 691 (AIYV…VFND), 692 to 739 (SIYV…SHGG), 741 to 793 (LWVM…VCDD), 795 to 847 (IWLC…ALES), and 849 to 896 (LYLI…TIPP).

As to expression, sperm.

In terms of biological role, may have an enzymatic role. Found the acrosomal vesicle at the anterior of sperm but not in the acrosomal process. This Limulus polyphemus (Atlantic horseshoe crab) protein is Beta-scruin.